The following is a 35-amino-acid chain: MDTRLLIVLLPIIAAASWAIYNIGKILLLQLTKRS.

At 1–4 the chain is on the lumenal side; it reads MDTR. Residues 5–23 traverse the membrane as a helical segment; that stretch reads LLIVLLPIIAAASWAIYNI. At 24–35 the chain is on the stromal side; that stretch reads GKILLLQLTKRS.

Belongs to the PsbY family. In terms of assembly, PSII is composed of 1 copy each of membrane proteins PsbA, PsbB, PsbC, PsbD, PsbE, PsbF, PsbH, PsbI, PsbJ, PsbK, PsbL, PsbM, PsbT, PsbX, PsbY, PsbZ, Psb30/Ycf12, at least 3 peripheral proteins of the oxygen-evolving complex and a large number of cofactors. It forms dimeric complexes.

The protein resides in the plastid. It localises to the chloroplast thylakoid membrane. Loosely associated component of the core of photosystem II (PSII), it is not always seen in crystals. PSII is a light-driven water plastoquinone oxidoreductase, using light energy to abstract electrons from H(2)O, generating a proton gradient subsequently used for ATP formation. This is Photosystem II reaction center protein Y from Cyanidioschyzon merolae (strain NIES-3377 / 10D) (Unicellular red alga).